We begin with the raw amino-acid sequence, 65 residues long: Large ribosomal subunit protein bL35 (65 aa).

The span at 1–16 (MPKMKTHRASAKRFKK) shows a compositional bias: basic residues. The disordered stretch occupies residues 1–24 (MPKMKTHRASAKRFKKTANGGLKS).

This sequence belongs to the bacterial ribosomal protein bL35 family.

This is Large ribosomal subunit protein bL35 from Leuconostoc mesenteroides subsp. mesenteroides (strain ATCC 8293 / DSM 20343 / BCRC 11652 / CCM 1803 / JCM 6124 / NCDO 523 / NBRC 100496 / NCIMB 8023 / NCTC 12954 / NRRL B-1118 / 37Y).